The chain runs to 486 residues: UDP-N-acetylmuramoyl-L-alanyl-D-glutamate--2,6-diaminopimelate ligase (486 aa).

A UDP-N-acetyl-alpha-D-muramoyl-L-alanyl-D-glutamate-binding site is contributed by S30. 112 to 118 (GTNGKTT) contacts ATP. Residues 154–155 (TT), S181, Q187, and R189 each bind UDP-N-acetyl-alpha-D-muramoyl-L-alanyl-D-glutamate. The residue at position 221 (K221) is an N6-carboxylysine. Residues R378, 402–405 (DNPR), G455, and E459 contribute to the meso-2,6-diaminopimelate site. Residues 402–405 (DNPR) carry the Meso-diaminopimelate recognition motif motif.

The protein belongs to the MurCDEF family. MurE subfamily. Mg(2+) is required as a cofactor. Post-translationally, carboxylation is probably crucial for Mg(2+) binding and, consequently, for the gamma-phosphate positioning of ATP.

The protein localises to the cytoplasm. The catalysed reaction is UDP-N-acetyl-alpha-D-muramoyl-L-alanyl-D-glutamate + meso-2,6-diaminopimelate + ATP = UDP-N-acetyl-alpha-D-muramoyl-L-alanyl-gamma-D-glutamyl-meso-2,6-diaminopimelate + ADP + phosphate + H(+). It functions in the pathway cell wall biogenesis; peptidoglycan biosynthesis. Functionally, catalyzes the addition of meso-diaminopimelic acid to the nucleotide precursor UDP-N-acetylmuramoyl-L-alanyl-D-glutamate (UMAG) in the biosynthesis of bacterial cell-wall peptidoglycan. The polypeptide is UDP-N-acetylmuramoyl-L-alanyl-D-glutamate--2,6-diaminopimelate ligase (Cytophaga hutchinsonii (strain ATCC 33406 / DSM 1761 / CIP 103989 / NBRC 15051 / NCIMB 9469 / D465)).